Here is a 360-residue protein sequence, read N- to C-terminus: Protein RecA (360 aa).

ATP is bound at residue 77–84 (GPESSGKT).

It belongs to the RecA family.

The protein resides in the cytoplasm. In terms of biological role, can catalyze the hydrolysis of ATP in the presence of single-stranded DNA, the ATP-dependent uptake of single-stranded DNA by duplex DNA, and the ATP-dependent hybridization of homologous single-stranded DNAs. It interacts with LexA causing its activation and leading to its autocatalytic cleavage. In Chelativorans sp. (strain BNC1), this protein is Protein RecA.